Here is a 316-residue protein sequence, read N- to C-terminus: ATP synthase gamma chain (316 aa).

Belongs to the ATPase gamma chain family. F-type ATPases have 2 components, CF(1) - the catalytic core - and CF(0) - the membrane proton channel. CF(1) has five subunits: alpha(3), beta(3), gamma(1), delta(1), epsilon(1). CF(0) has three main subunits: a, b and c.

The protein resides in the cellular thylakoid membrane. Its function is as follows. Produces ATP from ADP in the presence of a proton gradient across the membrane. The gamma chain is believed to be important in regulating ATPase activity and the flow of protons through the CF(0) complex. This chain is ATP synthase gamma chain, found in Synechococcus sp. (strain ATCC 27144 / PCC 6301 / SAUG 1402/1) (Anacystis nidulans).